The primary structure comprises 219 residues: Factor in the germline alpha (219 aa).

Residues 65–117 enclose the bHLH domain; the sequence is ERRRVANAKERERIKNLNRGFARLKALVPFLPQSRKPSKVDILKGATEYIQVL. The interval 124 to 151 is disordered; the sequence is AKDSKKQDPDEQSYSNNSSESHTSSARQ. The segment covering 136 to 148 has biased composition (low complexity); that stretch reads SYSNNSSESHTSS.

In terms of assembly, heterodimer with TCF3/isoform E12. As to expression, germ cells. Expressed in the fetal ovary, but not by a range of other tissues. Expression increases across mid-gestation, rising some 40-fold by the time of primordial follicle formation.

It localises to the nucleus. Germline specific transcription factor implicated in postnatal oocyte-specific gene expression. Plays a key regulatory role in the expression of multiple oocyte-specific genes, including those that initiate folliculogenesis and those that encode the zona pellucida (ZP1, ZP2 and ZP3) required for fertilization and early embryonic survival. Essential for oocytes to survive and form primordial follicles. The persistence of FIGLA in adult females suggests that it may regulate additional pathways that are essential for normal ovarian development. Binds to the E-box (5'-CANNTG-3') of the ZPs (ZP1, ZP2, ZP3) promoters. This chain is Factor in the germline alpha (FIGLA), found in Homo sapiens (Human).